Reading from the N-terminus, the 183-residue chain is Crossover junction endodeoxyribonuclease RuvC (183 aa).

Catalysis depends on residues D16, E75, and D147. Mg(2+)-binding residues include D16, E75, and D147.

Belongs to the RuvC family. Homodimer which binds Holliday junction (HJ) DNA. The HJ becomes 2-fold symmetrical on binding to RuvC with unstacked arms; it has a different conformation from HJ DNA in complex with RuvA. In the full resolvosome a probable DNA-RuvA(4)-RuvB(12)-RuvC(2) complex forms which resolves the HJ. Mg(2+) serves as cofactor.

Its subcellular location is the cytoplasm. The catalysed reaction is Endonucleolytic cleavage at a junction such as a reciprocal single-stranded crossover between two homologous DNA duplexes (Holliday junction).. Its function is as follows. The RuvA-RuvB-RuvC complex processes Holliday junction (HJ) DNA during genetic recombination and DNA repair. Endonuclease that resolves HJ intermediates. Cleaves cruciform DNA by making single-stranded nicks across the HJ at symmetrical positions within the homologous arms, yielding a 5'-phosphate and a 3'-hydroxyl group; requires a central core of homology in the junction. The consensus cleavage sequence is 5'-(A/T)TT(C/G)-3'. Cleavage occurs on the 3'-side of the TT dinucleotide at the point of strand exchange. HJ branch migration catalyzed by RuvA-RuvB allows RuvC to scan DNA until it finds its consensus sequence, where it cleaves and resolves the cruciform DNA. The protein is Crossover junction endodeoxyribonuclease RuvC of Azoarcus sp. (strain BH72).